A 143-amino-acid chain; its full sequence is Trypsin inhibitor CMc (143 aa).

The N-terminal stretch at methionine 1–alanine 24 is a signal peptide.

Belongs to the protease inhibitor I6 (cereal trypsin/alpha-amylase inhibitor) family. As to expression, endosperm.

It localises to the secreted. Functionally, trypsin inhibitor. No alpha-amylase inhibition detected. This is Trypsin inhibitor CMc (ITR2) from Hordeum vulgare (Barley).